Here is a 73-residue protein sequence, read N- to C-terminus: Large ribosomal subunit protein bL31 (73 aa).

Zn(2+) is bound by residues C16, C18, C37, and C40.

It belongs to the bacterial ribosomal protein bL31 family. Type A subfamily. Part of the 50S ribosomal subunit. Zn(2+) serves as cofactor.

Functionally, binds the 23S rRNA. The chain is Large ribosomal subunit protein bL31 from Blochmanniella floridana.